A 235-amino-acid polypeptide reads, in one-letter code: Derlin-3 (235 aa).

Residues 1–22 (MAWQGLAAEFLQVPAVTRAYTA) are Cytoplasmic-facing. A helical transmembrane segment spans residues 23-43 (ACVLTTAAVQLELLSPFQLYF). Over 44–58 (NPHLVFRKFQVWRLV) the chain is Lumenal. Residues 59–79 (TNFLFFGPLGFSFFFNMLFVF) form a helical membrane-spanning segment. Residues 80-98 (RYCRMLEEGSFRGRTADFV) lie on the Cytoplasmic side of the membrane. Residues 99–119 (FMFLFGGVLMTLLGLLGSLFF) traverse the membrane as a helical segment. The Lumenal portion of the chain corresponds to 120–157 (LGQALMAMLVYVWSRRSPRVRVNFFGLLTFQAPFLPWA). A helical transmembrane segment spans residues 158 to 178 (LMGFSLLLGNSILVDLLGIAV). The Cytoplasmic portion of the chain corresponds to 179 to 235 (GHIYYFLEDVFPNQPGGKRLLQTPGFLKLLLDAPAEDPNYLPLPEEQPGPHLPPPQQ). A disordered region spans residues 216-235 (PNYLPLPEEQPGPHLPPPQQ). The span at 223-235 (EEQPGPHLPPPQQ) shows a compositional bias: pro residues.

The protein belongs to the derlin family. As to quaternary structure, forms homo- and heterooligomers with DERL2 and, to a lesser extent, with DERL1. Interacts with VCP and EDEM1. Interacts with SELENOK and SELENOS. Interacts with the signal recognition particle/SRP and the SRP receptor; in the process of endoplasmic reticulum stress-induced pre-emptive quality control. Unlike DERL1 and DERL2, restricted to several tissues. Expressed at high levels in placenta, pancreas, spleen and small intestine.

It is found in the endoplasmic reticulum membrane. Its function is as follows. Functional component of endoplasmic reticulum-associated degradation (ERAD) for misfolded lumenal glycoproteins, but not that of misfolded nonglycoproteins. May act by forming a channel that allows the retrotranslocation of misfolded glycoproteins into the cytosol where they are ubiquitinated and degraded by the proteasome. May mediate the interaction between VCP and the misfolded glycoproteins. May be involved in endoplasmic reticulum stress-induced pre-emptive quality control, a mechanism that selectively attenuates the translocation of newly synthesized proteins into the endoplasmic reticulum and reroutes them to the cytosol for proteasomal degradation. The polypeptide is Derlin-3 (Homo sapiens (Human)).